A 943-amino-acid chain; its full sequence is MARGSALPRRPLLCIPAVWAAAALLLSVSRTSGEVEVLDPNDPLGPLDGQDGPIPTLKGYFLNFLEPVNNITIVQGQTAILHCKVAGNPPPNVRWLKNDAPVVQEPRRIIIRKTEYGSRLRIQDLDTTDTGYYQCVATNGMKTITATGVLFVRLGPTHSPNHNFQDDYHEDGFCQPYRGIACARFIGNRTIYVDSLQMQGEIENRITAAFTMIGTSTHLSDQCSQFAIPSFCHFVFPLCDARSRTPKPRELCRDECEVLESDLCRQEYTIARSNPLILMRLQLPKCEALPMPESPDAANCMRIGIPAERLGRYHQCYNGSGMDYRGTASTTKSGHQCQPWALQHPHSHHLSSTDFPELGGGHAYCRNPGGQMEGPWCFTQNKNVRMELCDVPSCSPRDSSKMGILYILVPSIAIPLVIACLFFLVCMCRNKQKASASTPQRRQLMASPSQDMEMPLINQHKQAKLKEISLSAVRFMEELGEDRFGKVYKGHLFGPAPGEQTQAVAIKTLKDKAEGPLREEFRHEAMLRARLQHPNVVCLLGVVTKDQPLSMIFSYCSHGDLHEFLVMRSPHSDVGSTDDDRTVKSALEPPDFVHLVAQIAAGMEYLSSHHVVHKDLATRNVLVYDKLNVKISDLGLFREVYAADYYKLLGNSLLPIRWMAPEAIMYGKFSIDSDIWSYGVVLWEVFSYGLQPYCGYSNQDVVEMIRNRQVLPCPDDCPAWVYALMIECWNEFPSRRPRFKDIHSRLRAWGNLSNYNSSAQTSGASNTTQTSSLSTSPVSNVSNARYVGPKQKAPPFPQPQFIPMKGQIRPMVPPPQLYVPVNGYQPVPAYGAYLPNFYPVQIPMQMAPQQVPPQMVPKPSSHHSGSGSTSTGYVTTAPSNTSMADRAALLSEGADDTQNAPEDGAQSTVQEAEEEEEGSVPETELLGDCDTLQVDEAQVQLEA.

Positions 1-33 (MARGSALPRRPLLCIPAVWAAAALLLSVSRTSG) are cleaved as a signal peptide. The Extracellular segment spans residues 34 to 403 (EVEVLDPNDP…CSPRDSSKMG (370 aa)). The Ig-like C2-type domain occupies 55 to 145 (PTLKGYFLNF…VATNGMKTIT (91 aa)). Asn-70 carries an N-linked (GlcNAc...) asparagine glycan. Disulfide bonds link Cys-83-Cys-135, Cys-174-Cys-239, Cys-182-Cys-232, Cys-223-Cys-264, Cys-252-Cys-300, Cys-256-Cys-286, Cys-316-Cys-394, Cys-337-Cys-377, and Cys-365-Cys-389. Residues 169-303 (HEDGFCQPYR…SPDAANCMRI (135 aa)) enclose the FZ domain. The N-linked (GlcNAc...) asparagine glycan is linked to Asn-188. The region spanning 316-394 (CYNGSGMDYR…RMELCDVPSC (79 aa)) is the Kringle domain. Residue Asn-318 is glycosylated (N-linked (GlcNAc...) asparagine). The chain crosses the membrane as a helical span at residues 404–424 (ILYILVPSIAIPLVIACLFFL). Topologically, residues 425–943 (VCMCRNKQKA…VDEAQVQLEA (519 aa)) are cytoplasmic. Residues Ser-469 and Ser-471 each carry the sulfoserine; partial modification. A Protein kinase domain is found at 473-746 (VRFMEELGED…PRFKDIHSRL (274 aa)). ATP-binding positions include 479–487 (LGEDRFGKV) and Lys-507. Asp-615 (proton acceptor) is an active-site residue. A Phosphotyrosine; by autocatalysis modification is found at Tyr-646. 2 disordered regions span residues 757–796 (SSAQTSGASNTTQTSSLSTSPVSNVSNARYVGPKQKAPPF) and 850–931 (QVPP…DCDT). 2 stretches are compositionally biased toward low complexity: residues 765–791 (SNTTQTSSLSTSPVSNVSNARYVGPKQ) and 857–872 (PKPSSHHSGSGSTSTG). Residue Arg-785 is modified to Asymmetric dimethylarginine. Residues 873 to 883 (YVTTAPSNTSM) are compositionally biased toward polar residues.

The protein belongs to the protein kinase superfamily. Tyr protein kinase family. ROR subfamily. In terms of assembly, homodimer; promotes osteogenesis. Binds YWHAB. Interacts with WTIP. Interacts with ROR2. Mg(2+) serves as cofactor.

It is found in the cell membrane. The enzyme catalyses L-tyrosyl-[protein] + ATP = O-phospho-L-tyrosyl-[protein] + ADP + H(+). Functionally, tyrosine-protein kinase receptor which may be involved in the early formation of the chondrocytes. It seems to be required for cartilage and growth plate development. Phosphorylates YWHAB, leading to induction of osteogenesis and bone formation. In contrast, has also been shown to have very little tyrosine kinase activity in vitro. May act as a receptor for wnt ligand WNT5A which may result in the inhibition of WNT3A-mediated signaling. The sequence is that of Tyrosine-protein kinase transmembrane receptor ROR2 (ROR2) from Homo sapiens (Human).